We begin with the raw amino-acid sequence, 440 residues long: Ribulose bisphosphate carboxylase large chain (440 aa).

Position 3 is an N6,N6,N6-trimethyllysine (K3). The substrate site is built by N112 and T162. The active-site Proton acceptor is the K164. K166 is a substrate binding site. The Mg(2+) site is built by K190, D192, and E193. K190 bears the N6-carboxylysine mark. H283 serves as the catalytic Proton acceptor. Positions 284, 316, and 368 each coordinate substrate.

It belongs to the RuBisCO large chain family. Type I subfamily. As to quaternary structure, heterohexadecamer of 8 large chains and 8 small chains; disulfide-linked. The disulfide link is formed within the large subunit homodimers. Mg(2+) is required as a cofactor. The disulfide bond which can form in the large chain dimeric partners within the hexadecamer appears to be associated with oxidative stress and protein turnover.

The protein resides in the plastid. It localises to the chloroplast. It catalyses the reaction 2 (2R)-3-phosphoglycerate + 2 H(+) = D-ribulose 1,5-bisphosphate + CO2 + H2O. It carries out the reaction D-ribulose 1,5-bisphosphate + O2 = 2-phosphoglycolate + (2R)-3-phosphoglycerate + 2 H(+). RuBisCO catalyzes two reactions: the carboxylation of D-ribulose 1,5-bisphosphate, the primary event in carbon dioxide fixation, as well as the oxidative fragmentation of the pentose substrate in the photorespiration process. Both reactions occur simultaneously and in competition at the same active site. This chain is Ribulose bisphosphate carboxylase large chain, found in Bambusa multiplex (Hedge bamboo).